The following is a 253-amino-acid chain: Glucosamine-6-phosphate deaminase (253 aa).

The active-site Proton acceptor; for enolization step is Asp65. The active-site For ring-opening step is Asn133. Residue His135 is the Proton acceptor; for ring-opening step of the active site. Residue Glu140 is the For ring-opening step of the active site.

It belongs to the glucosamine/galactosamine-6-phosphate isomerase family. NagB subfamily.

It carries out the reaction alpha-D-glucosamine 6-phosphate + H2O = beta-D-fructose 6-phosphate + NH4(+). The protein operates within amino-sugar metabolism; N-acetylneuraminate degradation; D-fructose 6-phosphate from N-acetylneuraminate: step 5/5. Catalyzes the reversible isomerization-deamination of glucosamine 6-phosphate (GlcN6P) to form fructose 6-phosphate (Fru6P) and ammonium ion. The chain is Glucosamine-6-phosphate deaminase from Corynebacterium efficiens (strain DSM 44549 / YS-314 / AJ 12310 / JCM 11189 / NBRC 100395).